A 533-amino-acid polypeptide reads, in one-letter code: Retinoid isomerohydrolase (533 aa).

S2 is modified (N-acetylserine). 2 positions are modified to phosphothreonine: T101 and T105. C112 carries the S-palmitoyl cysteine; in membrane form lipid modification. N6-acetyllysine is present on K113. A Phosphoserine modification is found at S117. H180 lines the Fe cation pocket. A lipid anchor (S-palmitoyl cysteine; in membrane form) is attached at C231. The Fe cation site is built by H241 and H313. S-palmitoyl cysteine; in membrane form attachment occurs at residues C329 and C330. Position 527 (H527) interacts with Fe cation.

It belongs to the carotenoid oxygenase family. Interacts with MYO7A; this mediates light-dependent intracellular transport of RPE65. Fe(2+) is required as a cofactor. Post-translationally, palmitoylation by LRAT regulates ligand binding specificity; the palmitoylated form (membrane form) specifically binds all-trans-retinyl-palmitate, while the soluble unpalmitoylated form binds all-trans-retinol (vitamin A). Retinal pigment epithelium specific.

It localises to the cytoplasm. Its subcellular location is the cell membrane. It is found in the microsome membrane. It carries out the reaction an all-trans-retinyl ester + H2O = 11-cis-retinol + a fatty acid + H(+). It catalyses the reaction lutein = (3R,3'S)-zeaxanthin. The enzyme catalyses all-trans-retinyl hexadecanoate + H2O = 11-cis-retinol + hexadecanoate + H(+). Critical isomerohydrolase in the retinoid cycle involved in regeneration of 11-cis-retinal, the chromophore of rod and cone opsins. Catalyzes the cleavage and isomerization of all-trans-retinyl fatty acid esters to 11-cis-retinol which is further oxidized by 11-cis retinol dehydrogenase to 11-cis-retinal for use as visual chromophore. Essential for the production of 11-cis retinal for both rod and cone photoreceptors. Also capable of catalyzing the isomerization of lutein to meso-zeaxanthin an eye-specific carotenoid. The soluble form binds vitamin A (all-trans-retinol), making it available for LRAT processing to all-trans-retinyl ester. The membrane form, palmitoylated by LRAT, binds all-trans-retinyl esters, making them available for IMH (isomerohydrolase) processing to all-cis-retinol. The soluble form is regenerated by transferring its palmitoyl groups onto 11-cis-retinol, a reaction catalyzed by LRAT. This is Retinoid isomerohydrolase (RPE65) from Chlorocebus aethiops (Green monkey).